The following is a 210-amino-acid chain: Probable GTP-binding protein EngB (210 aa).

In terms of domain architecture, EngB-type G spans Cys-25–Glu-199. GTP is bound by residues Gly-33 to Ser-40, Gly-60 to Leu-64, Asp-78 to Gly-81, Thr-145 to Asp-148, and Phe-178 to Ser-180. Ser-40 and Thr-62 together coordinate Mg(2+).

This sequence belongs to the TRAFAC class TrmE-Era-EngA-EngB-Septin-like GTPase superfamily. EngB GTPase family. Mg(2+) serves as cofactor.

Its function is as follows. Necessary for normal cell division and for the maintenance of normal septation. The protein is Probable GTP-binding protein EngB of Salmonella agona (strain SL483).